The sequence spans 160 residues: Transcriptional repressor NrdR (160 aa).

The segment at Cys-3–Cys-34 is a zinc-finger region. In terms of domain architecture, ATP-cone spans Leu-49 to Asp-139.

The protein belongs to the NrdR family. Zn(2+) serves as cofactor.

In terms of biological role, negatively regulates transcription of bacterial ribonucleotide reductase nrd genes and operons by binding to NrdR-boxes. The protein is Transcriptional repressor NrdR of Bartonella quintana (strain Toulouse) (Rochalimaea quintana).